A 666-amino-acid polypeptide reads, in one-letter code: ATP synthase subunit alpha 2 (666 aa).

182–189 (GDRATGKT) provides a ligand contact to ATP. The segment at 527-666 (MPAEDAAGDI…DAEAEARHKR (140 aa)) is disordered. Basic and acidic residues predominate over residues 545-590 (ARGDADRDADHGANREVSREVSPEASREVSREVSCEVSHEADRDAA). Residues 591–601 (ADAARVAGRAP) show a composition bias toward low complexity. Basic and acidic residues predominate over residues 623–641 (ADGDRASASRPRPDARGDA).

This sequence belongs to the ATPase alpha/beta chains family. F-type ATPases have 2 components, CF(1) - the catalytic core - and CF(0) - the membrane proton channel. CF(1) has five subunits: alpha(3), beta(3), gamma(1), delta(1), epsilon(1). CF(0) has three main subunits: a(1), b(2) and c(9-12). The alpha and beta chains form an alternating ring which encloses part of the gamma chain. CF(1) is attached to CF(0) by a central stalk formed by the gamma and epsilon chains, while a peripheral stalk is formed by the delta and b chains.

The protein localises to the cell inner membrane. It catalyses the reaction ATP + H2O + 4 H(+)(in) = ADP + phosphate + 5 H(+)(out). Functionally, produces ATP from ADP in the presence of a proton gradient across the membrane. The alpha chain is a regulatory subunit. The protein is ATP synthase subunit alpha 2 of Burkholderia pseudomallei (strain 1106a).